Reading from the N-terminus, the 131-residue chain is Large ribosomal subunit protein bL17 (131 aa).

The protein belongs to the bacterial ribosomal protein bL17 family. Part of the 50S ribosomal subunit. Contacts protein L32.

This chain is Large ribosomal subunit protein bL17, found in Shewanella amazonensis (strain ATCC BAA-1098 / SB2B).